Here is a 199-residue protein sequence, read N- to C-terminus: Recombination protein RecR (199 aa).

The C4-type zinc-finger motif lies at 56 to 71; sequence CQVCFHLSAESTCEIC. A Toprim domain is found at 79–173; the sequence is QTLCVVADSR…KVTRIAFGLP (95 aa).

The protein belongs to the RecR family.

In terms of biological role, may play a role in DNA repair. It seems to be involved in an RecBC-independent recombinational process of DNA repair. It may act with RecF and RecO. This chain is Recombination protein RecR, found in Gloeothece citriformis (strain PCC 7424) (Cyanothece sp. (strain PCC 7424)).